Here is a 129-residue protein sequence, read N- to C-terminus: Large ribosomal subunit protein bL21 (129 aa).

It belongs to the bacterial ribosomal protein bL21 family. Part of the 50S ribosomal subunit. Contacts protein L20.

This protein binds to 23S rRNA in the presence of protein L20. This is Large ribosomal subunit protein bL21 from Microcystis aeruginosa (strain NIES-843 / IAM M-2473).